The following is a 194-amino-acid chain: Imidazoleglycerol-phosphate dehydratase (194 aa).

It belongs to the imidazoleglycerol-phosphate dehydratase family.

The protein localises to the cytoplasm. It catalyses the reaction D-erythro-1-(imidazol-4-yl)glycerol 3-phosphate = 3-(imidazol-4-yl)-2-oxopropyl phosphate + H2O. Its pathway is amino-acid biosynthesis; L-histidine biosynthesis; L-histidine from 5-phospho-alpha-D-ribose 1-diphosphate: step 6/9. This chain is Imidazoleglycerol-phosphate dehydratase, found in Rubrobacter xylanophilus (strain DSM 9941 / JCM 11954 / NBRC 16129 / PRD-1).